Consider the following 488-residue polypeptide: Glycogen synthase (488 aa).

Position 20 (Arg20) interacts with ADP-alpha-D-glucose.

The protein belongs to the glycosyltransferase 1 family. Bacterial/plant glycogen synthase subfamily.

The catalysed reaction is [(1-&gt;4)-alpha-D-glucosyl](n) + ADP-alpha-D-glucose = [(1-&gt;4)-alpha-D-glucosyl](n+1) + ADP + H(+). It participates in glycan biosynthesis; glycogen biosynthesis. Its function is as follows. Synthesizes alpha-1,4-glucan chains using ADP-glucose. The polypeptide is Glycogen synthase (Chlorobaculum parvum (strain DSM 263 / NCIMB 8327) (Chlorobium vibrioforme subsp. thiosulfatophilum)).